The chain runs to 446 residues: Exodeoxyribonuclease 7 large subunit (446 aa).

The protein belongs to the XseA family. Heterooligomer composed of large and small subunits.

It localises to the cytoplasm. The catalysed reaction is Exonucleolytic cleavage in either 5'- to 3'- or 3'- to 5'-direction to yield nucleoside 5'-phosphates.. Bidirectionally degrades single-stranded DNA into large acid-insoluble oligonucleotides, which are then degraded further into small acid-soluble oligonucleotides. The sequence is that of Exodeoxyribonuclease 7 large subunit from Streptococcus pyogenes serotype M6 (strain ATCC BAA-946 / MGAS10394).